A 213-amino-acid chain; its full sequence is Serine acetyltransferase (213 aa).

It belongs to the transferase hexapeptide repeat family.

The protein localises to the cytoplasm. It carries out the reaction L-serine + acetyl-CoA = O-acetyl-L-serine + CoA. The protein operates within amino-acid biosynthesis; L-cysteine biosynthesis; L-cysteine from L-serine: step 1/2. The protein is Serine acetyltransferase (cysE) of Staphylococcus aureus (strain COL).